Here is a 178-residue protein sequence, read N- to C-terminus: Large ribosomal subunit protein uL10 (178 aa).

It belongs to the universal ribosomal protein uL10 family. As to quaternary structure, part of the ribosomal stalk of the 50S ribosomal subunit. The N-terminus interacts with L11 and the large rRNA to form the base of the stalk. The C-terminus forms an elongated spine to which L12 dimers bind in a sequential fashion forming a multimeric L10(L12)X complex.

Forms part of the ribosomal stalk, playing a central role in the interaction of the ribosome with GTP-bound translation factors. The chain is Large ribosomal subunit protein uL10 from Mycobacterium tuberculosis (strain ATCC 25177 / H37Ra).